The following is a 285-amino-acid chain: 4-hydroxybenzoate octaprenyltransferase (285 aa).

9 helical membrane-spanning segments follow: residues Ile19–Leu39, Trp42–Ile62, Leu82–Cys102, Phe104–Leu124, Tyr136–Ala156, Trp166–Val186, Ile210–Ala230, Gly233–Ile253, and Phe265–Ile285.

This sequence belongs to the UbiA prenyltransferase family. Requires Mg(2+) as cofactor.

It is found in the cell inner membrane. The catalysed reaction is all-trans-octaprenyl diphosphate + 4-hydroxybenzoate = 4-hydroxy-3-(all-trans-octaprenyl)benzoate + diphosphate. Its pathway is cofactor biosynthesis; ubiquinone biosynthesis. In terms of biological role, catalyzes the prenylation of para-hydroxybenzoate (PHB) with an all-trans polyprenyl group. Mediates the second step in the final reaction sequence of ubiquinone-8 (UQ-8) biosynthesis, which is the condensation of the polyisoprenoid side chain with PHB, generating the first membrane-bound Q intermediate 3-octaprenyl-4-hydroxybenzoate. The chain is 4-hydroxybenzoate octaprenyltransferase from Aliivibrio fischeri (strain ATCC 700601 / ES114) (Vibrio fischeri).